A 217-amino-acid polypeptide reads, in one-letter code: 3,4-dihydroxy-2-butanone 4-phosphate synthase (217 aa).

D-ribulose 5-phosphate-binding positions include 37–38 (RE), Asp-42, 150–154 (RGGHT), and Glu-174. Glu-38 provides a ligand contact to Mg(2+). His-153 serves as a coordination point for Mg(2+).

This sequence belongs to the DHBP synthase family. As to quaternary structure, homodimer. Mg(2+) serves as cofactor. Mn(2+) is required as a cofactor.

The enzyme catalyses D-ribulose 5-phosphate = (2S)-2-hydroxy-3-oxobutyl phosphate + formate + H(+). It participates in cofactor biosynthesis; riboflavin biosynthesis; 2-hydroxy-3-oxobutyl phosphate from D-ribulose 5-phosphate: step 1/1. Functionally, catalyzes the conversion of D-ribulose 5-phosphate to formate and 3,4-dihydroxy-2-butanone 4-phosphate. This chain is 3,4-dihydroxy-2-butanone 4-phosphate synthase, found in Citrobacter koseri (strain ATCC BAA-895 / CDC 4225-83 / SGSC4696).